The sequence spans 563 residues: GTPase Obg (563 aa).

The region spanning 2–168 (SDFVDRVTVH…RDVILELKSI (167 aa)) is the Obg domain. Positions 169-349 (ADVALVGFPS…LNWALADLVT (181 aa)) constitute an OBG-type G domain. Residues 175–182 (GFPSAGKS), 200–204 (FTTLV), 221–224 (DVPG), 301–304 (NKVD), and 330–332 (STA) contribute to the GTP site. Mg(2+)-binding residues include Ser-182 and Thr-202. The OCT domain maps to 383-469 (DEGGNALDFT…DRAVEFDWDP (87 aa)). Residues 525 to 563 (MMAERKAGHWADPSVDDDRHDETSLFGRGETADDEDVEQ) are disordered.

The protein belongs to the TRAFAC class OBG-HflX-like GTPase superfamily. OBG GTPase family. As to quaternary structure, monomer. It depends on Mg(2+) as a cofactor.

The protein resides in the cytoplasm. An essential GTPase which binds GTP, GDP and possibly (p)ppGpp with moderate affinity, with high nucleotide exchange rates and a fairly low GTP hydrolysis rate. Plays a role in control of the cell cycle, stress response, ribosome biogenesis and in those bacteria that undergo differentiation, in morphogenesis control. This Bifidobacterium adolescentis (strain ATCC 15703 / DSM 20083 / NCTC 11814 / E194a) protein is GTPase Obg.